Consider the following 977-residue polypeptide: Short transient receptor potential channel 4 (977 aa).

Residues 1–324 (MAQFYYKRNV…YDEFPGWRRR (324 aa)) are Cytoplasmic-facing. ANK repeat units lie at residues 29–60 (LSPS…IYFK), 71–93 (RTAL…LSFN), 96–118 (VGDA…LLNH), and 141–165 (PDIT…VQKG). Positions 172, 176, 178, and 181 each coordinate Zn(2+). The stretch at 223–260 (LSWELQELSKVENEFKSEYEELSRQCKQFAKDLLDQTR) forms a coiled coil. An intramembrane region (discontinuously helical) is located at residues 325–359 (HWAVKMVTCFIIGLLFPVFSVCYLIAPKSPLGLFI). Over 360-362 (RKP) the chain is Cytoplasmic. The chain crosses the membrane as a helical span at residues 363–383 (FIKFICHTASYLTFLFLLLLA). Over 384 to 403 (SQHIDRSDLNRQGPPPTIVE) the chain is Extracellular. A helical membrane pass occupies residues 404-418 (WMILPWVLGFIWGEI). Ca(2+)-binding residues include E417, Q420, N435, and D438. The Cytoplasmic portion of the chain corresponds to 419–432 (KQMWDGGLQDYIHD). The chain crosses the membrane as a helical span at residues 433–453 (WWNLMDFVMNSLYLATISLKI). Residues 454-475 (VAFVKYSALNPRESWDMWHPTL) are Extracellular-facing. Residues 476 to 498 (VAEALFAIANIFSSLRLISLFTA) form a helical membrane-spanning segment. Over 499 to 511 (NSHLGPLQISLGR) the chain is Cytoplasmic. A helical transmembrane segment spans residues 512–534 (MLLDILKFLFIYCLVLLAFANGL). Residues 535-599 (NQLYFYYEET…HEFTEFVGAT (65 aa)) are Extracellular-facing. Residues C549 and C554 are joined by a disulfide bond. Residues 600-620 (MFGTYNVISLVVLLNMLIAMM) form a helical membrane-spanning segment. The interaction with ITPR1, ITPR2 and ITPR3 stretch occupies residues 615-977 (MLIAMMNNSY…THEDYVTTRL (363 aa)). Residues 621–977 (NNSYQLIADH…THEDYVTTRL (357 aa)) lie on the Cytoplasmic side of the membrane. The tract at residues 762 to 790 (IQSANASKESSNSADSDEKSDSEGNSKDK) is disordered. A compositionally biased stretch (low complexity) spans 764 to 775 (SANASKESSNSA). Over residues 777–788 (SDEKSDSEGNSK) the composition is skewed to basic and acidic residues. Residues Y959 and Y972 each carry the phosphotyrosine; by FYN modification. The segment at 975 to 977 (TRL) is PDZ-binding domain.

Belongs to the transient receptor (TC 1.A.4) family. STrpC subfamily. TRPC4 sub-subfamily. As to quaternary structure, homotetramer. Heterotetramer with TRPC1 and/or TRPC5. Forms a heteromeric ion channel with TRPC1, with a 1:3 TRPC1:TRPC4 stoichiometry. Interacts with TRPC4AP. Isoform alpha but not isoform beta interacts with ITPR1, ITPR2 and ITPR3. Interacts with (via PDZ-binding domain) with NHERF1. Interacts with MX1 and RNF24. Interacts (via CIRB domain) with SESTD1 (via spectrin 1 repeat). Interacts with CDH5 and CTNNB1. Interacts with SPTAN1 (via C-terminal spectrin repeats) and SPTBN5 (via C-terminus). Interacts (via protein 4.1-binding domain) with EPB41L2. Interacts with PLSCR1. In terms of processing, phosphorylation modulates TRPC channel function by regulating the level of TRPC4 at the cell surface and by increasing the association with NHERF1. In terms of tissue distribution, strongly expressed in placenta. Expressed at lower levels in heart, pancreas, kidney and brain. Expressed in endothelial cells. Isoform alpha was found to be the predominant isoform. Isoform beta was not found in pancreas and brain.

Its subcellular location is the cell membrane. It catalyses the reaction Ca(2+)(in) = Ca(2+)(out). The catalysed reaction is Na(+)(in) = Na(+)(out). The enzyme catalyses Li(+)(in) = Li(+)(out). It carries out the reaction Cs(+)(in) = Cs(+)(out). May be operated by a phosphatidylinositol second messenger system activated by receptor tyrosine kinases or G-protein coupled receptors. May be activated by intracellular calcium store depletion. Inhibited by xanthine-based inhibitor Pico145. Forms a receptor-activated non-selective calcium permeant cation channel. Acts as a cell-cell contact-dependent endothelial calcium entry channel. Forms a homomeric ion channel or a heteromeric ion channel with TRPC1; the heteromeric ion channel has reduced calcium permeability compared to the homomeric channel. Also permeable to monovalent ions including sodium, lithium and cesium ions. In terms of biological role, forms a receptor-activated non-selective calcium permeant cation channel. This chain is Short transient receptor potential channel 4 (TRPC4), found in Homo sapiens (Human).